Reading from the N-terminus, the 772-residue chain is Carnitine O-palmitoyltransferase 1, muscle isoform (772 aa).

Topologically, residues 1 to 47 (MAEAHQAVAFQFTVTPEGVDFRLSREALKHIYLSGINSWKKRLIRIK) are cytoplasmic. A helical transmembrane segment spans residues 48 to 73 (NGILRGVYPGSPTSWLVVASATAGSS). Residues 74-102 (YYNVDISMGLVNHIQRCLPERYGPYWTPQ) lie on the Mitochondrial intermembrane side of the membrane. Residues 103–122 (TRALLSMAVVSTGVWMIGIF) form a helical membrane-spanning segment. Over 123–772 (FFRQTLKLLL…DLFQVPKTDS (650 aa)) the chain is Cytoplasmic. The active-site Proton acceptor is His473. 555–567 (GKGLIKKCRTSPD) is a CoA binding site. (R)-carnitine-binding residues include Tyr589 and Thr602.

It belongs to the carnitine/choline acetyltransferase family.

The protein resides in the mitochondrion outer membrane. The catalysed reaction is (R)-carnitine + hexadecanoyl-CoA = O-hexadecanoyl-(R)-carnitine + CoA. It functions in the pathway lipid metabolism; fatty acid beta-oxidation. Catalyzes the transfer of the acyl group of long-chain fatty acid-CoA conjugates onto carnitine, an essential step for the mitochondrial uptake of long-chain fatty acids and their subsequent beta-oxidation in the mitochondrion. The polypeptide is Carnitine O-palmitoyltransferase 1, muscle isoform (CPT1B) (Sus scrofa (Pig)).